We begin with the raw amino-acid sequence, 93 residues long: Large ribosomal subunit protein eL42 (93 aa).

The Zn(2+) site is built by Cys-11, Cys-14, Cys-71, and Cys-74. Residues 11 to 74 (CRYCGKHTLH…VNIRFRCTEC (64 aa)) form a C4-type zinc finger.

The protein belongs to the eukaryotic ribosomal protein eL42 family. As to quaternary structure, part of the 50S ribosomal subunit. Zn(2+) serves as cofactor.

In terms of biological role, binds to the 23S rRNA. The polypeptide is Large ribosomal subunit protein eL42 (Archaeoglobus fulgidus (strain ATCC 49558 / DSM 4304 / JCM 9628 / NBRC 100126 / VC-16)).